The sequence spans 116 residues: Cuticle protein AM1274 (116 aa).

Pyrrolidone carboxylic acid is present on glutamine 1. Residues 1 to 22 (QLANEPPIEIIRQESTDNGDGN) are disordered. In terms of domain architecture, Chitin-binding type R&amp;R spans 20-85 (DGNFNFLFET…PVSDFIPTPH (66 aa)). Residue threonine 83 is glycosylated (O-linked (HexNAc) threonine).

Arthrodial membrane.

In Cancer pagurus (Rock crab), this protein is Cuticle protein AM1274.